A 120-amino-acid chain; its full sequence is Large ribosomal subunit protein eL34 (120 aa).

It belongs to the eukaryotic ribosomal protein eL34 family.

The chain is Large ribosomal subunit protein eL34 (RPL34) from Nicotiana tabacum (Common tobacco).